Consider the following 289-residue polypeptide: 4-hydroxy-3-methylbut-2-enyl diphosphate reductase (289 aa).

Cysteine 13 is a [4Fe-4S] cluster binding site. (2E)-4-hydroxy-3-methylbut-2-enyl diphosphate is bound by residues histidine 42 and histidine 74. Residues histidine 42 and histidine 74 each coordinate dimethylallyl diphosphate. Isopentenyl diphosphate is bound by residues histidine 42 and histidine 74. Cysteine 96 is a [4Fe-4S] cluster binding site. Residue histidine 124 participates in (2E)-4-hydroxy-3-methylbut-2-enyl diphosphate binding. Histidine 124 is a dimethylallyl diphosphate binding site. An isopentenyl diphosphate-binding site is contributed by histidine 124. The Proton donor role is filled by glutamate 126. Threonine 165 lines the (2E)-4-hydroxy-3-methylbut-2-enyl diphosphate pocket. Residue cysteine 193 coordinates [4Fe-4S] cluster. (2E)-4-hydroxy-3-methylbut-2-enyl diphosphate contacts are provided by serine 221, asparagine 223, and serine 265. Dimethylallyl diphosphate is bound by residues serine 221, asparagine 223, and serine 265. 3 residues coordinate isopentenyl diphosphate: serine 221, asparagine 223, and serine 265.

The protein belongs to the IspH family. Requires [4Fe-4S] cluster as cofactor.

The enzyme catalyses isopentenyl diphosphate + 2 oxidized [2Fe-2S]-[ferredoxin] + H2O = (2E)-4-hydroxy-3-methylbut-2-enyl diphosphate + 2 reduced [2Fe-2S]-[ferredoxin] + 2 H(+). It catalyses the reaction dimethylallyl diphosphate + 2 oxidized [2Fe-2S]-[ferredoxin] + H2O = (2E)-4-hydroxy-3-methylbut-2-enyl diphosphate + 2 reduced [2Fe-2S]-[ferredoxin] + 2 H(+). It participates in isoprenoid biosynthesis; dimethylallyl diphosphate biosynthesis; dimethylallyl diphosphate from (2E)-4-hydroxy-3-methylbutenyl diphosphate: step 1/1. It functions in the pathway isoprenoid biosynthesis; isopentenyl diphosphate biosynthesis via DXP pathway; isopentenyl diphosphate from 1-deoxy-D-xylulose 5-phosphate: step 6/6. With respect to regulation, highly sensitive to dioxygen. In terms of biological role, catalyzes the conversion of 1-hydroxy-2-methyl-2-(E)-butenyl 4-diphosphate (HMBPP) into a mixture of isopentenyl diphosphate (IPP) and dimethylallyl diphosphate (DMAPP). Acts in the terminal step of the DOXP/MEP pathway for isoprenoid precursor biosynthesis. This Aquifex aeolicus (strain VF5) protein is 4-hydroxy-3-methylbut-2-enyl diphosphate reductase.